The sequence spans 156 residues: Small ribosomal subunit protein uS7 (156 aa).

It belongs to the universal ribosomal protein uS7 family. As to quaternary structure, part of the 30S ribosomal subunit. Contacts proteins S9 and S11.

Functionally, one of the primary rRNA binding proteins, it binds directly to 16S rRNA where it nucleates assembly of the head domain of the 30S subunit. Is located at the subunit interface close to the decoding center, probably blocks exit of the E-site tRNA. The chain is Small ribosomal subunit protein uS7 from Pseudoalteromonas translucida (strain TAC 125).